Consider the following 190-residue polypeptide: ADP-ribosylation factor F (190 aa).

GTP contacts are provided by residues 34-40 (DGAGKST), 75-79 (DIGGQ), and 136-139 (NKQD).

This sequence belongs to the small GTPase superfamily. Arf family.

The protein localises to the golgi apparatus. Functionally, GTP-binding protein that may be involved in protein trafficking. May modulate vesicle budding and uncoating within the Golgi apparatus. The sequence is that of ADP-ribosylation factor F (arrF) from Dictyostelium discoideum (Social amoeba).